Reading from the N-terminus, the 267-residue chain is Methylglyoxal reductase DkgB (267 aa).

Tyr39 functions as the Proton donor in the catalytic mechanism. His97 provides a ligand contact to substrate. Residue 179-231 (MTLAYGKALKDEVIARIAAKHNATPAQVILAWAMGEGYSVIPSSTKRENLESN) coordinates NADP(+).

It belongs to the aldo/keto reductase family. In terms of assembly, monomer.

It is found in the cytoplasm. It catalyses the reaction hydroxyacetone + NADP(+) = methylglyoxal + NADPH + H(+). Aldo-keto reductase that significantly contributes to cellular methylglyoxal detoxification by catalyzing the NADPH-dependent conversion of methylglyoxal to acetol. In Escherichia coli O157:H7, this protein is Methylglyoxal reductase DkgB.